The primary structure comprises 57 residues: Preprotein translocase subunit SecG (57 aa).

Over 1-33 (MARRRRYEGLNPFVAAGLIKFSEEGELERIKLT) the chain is Cytoplasmic. Residues 34–55 (PKSAVVISVALIAAILVLNLIH) form a helical membrane-spanning segment. Residues 56–57 (PL) are Extracellular-facing.

The protein belongs to the SEC61-beta family. In terms of assembly, component of the protein translocase complex. Heterotrimer consisting of alpha (SecY), beta (SecG) and gamma (SecE) subunits. Can form oligomers of the heterotrimer.

It is found in the cell membrane. In terms of biological role, involved in protein export. The function of the beta subunit is unknown, but it may be involved in stabilization of the trimeric complex. This Pyrobaculum neutrophilum (strain DSM 2338 / JCM 9278 / NBRC 100436 / V24Sta) (Thermoproteus neutrophilus) protein is Preprotein translocase subunit SecG.